We begin with the raw amino-acid sequence, 217 residues long: Large ribosomal subunit protein uL1 (217 aa).

It belongs to the universal ribosomal protein uL1 family. In terms of assembly, part of the 50S ribosomal subunit.

Binds directly to 23S rRNA. The L1 stalk is quite mobile in the ribosome, and is involved in E site tRNA release. In terms of biological role, protein L1 is also a translational repressor protein, it controls the translation of the L11 operon by binding to its mRNA. The chain is Large ribosomal subunit protein uL1 from Anaplasma marginale (strain St. Maries).